A 750-amino-acid polypeptide reads, in one-letter code: Circadian input-output histidine kinase CikA (750 aa).

The tract at residues 1 to 173 (MLPAFSPIFR…QVIAQIRQSL (173 aa)) is N-terminal domain. The segment at 174 to 333 (DLSEILNNAV…KNFLGQIGEH (160 aa)) is GAF domain. The Histidine kinase domain occupies 385 to 609 (NISHELRTPL…IFTTVIPQQN (225 aa)). The residue at position 388 (His-388) is a Phosphohistidine; by autocatalysis. Residues 604-750 (VIPQQNFPPT…VQSIQQEPLR (147 aa)) form a psR domain, bind KaiB(fs) region. Residues 631–745 (SVIVIEQDEE…LLLQRVQSIQ (115 aa)) enclose the Response regulatory domain. Position 680 is a 4-aspartylphosphate (Asp-680).

The protein in the N-terminal section; belongs to the phytochrome family. As to quaternary structure, homodimer. Part of the circadian clock (KaiA, KaiB, KaiC, CikA, RpaA, SasA), the composition of which varies during the circadian cycle. KaiA and CikA compete for binding to KaiB(fs). Interacts with RpaA.

The catalysed reaction is ATP + protein L-histidine = ADP + protein N-phospho-L-histidine.. Functionally, functions in an input pathway to the Kai circadian clock. Senses oxidized quinones via its C-terminal pseudo-receiver domain, providing a link between cell metabolism and the clock. Affects the ratio of phosphorylated to unphosphorylated KaiC, binds quinones via its pseudo-receptor domain. Quinone-binding destabilizes the protein rapidly. Autophosphorylates, does not transfer the phosphate to its pseudo-receiver (PsR) domain. May play a role in cell division. In terms of biological role, also functions in a two-component CikA/RpaA output pathway from the circadian clock, negatively regulating kaiBC expression independently of labA and of sasA. One of three clock output pathways. Dephosphorylates phospho-RpaA, enhanced by KaiB and KaiC, has only modest kinase activity on RpaA. This chain is Circadian input-output histidine kinase CikA, found in Synechocystis sp. (strain ATCC 27184 / PCC 6803 / Kazusa).